The chain runs to 266 residues: Indole-3-glycerol phosphate synthase (266 aa).

This sequence belongs to the TrpC family.

The enzyme catalyses 1-(2-carboxyphenylamino)-1-deoxy-D-ribulose 5-phosphate + H(+) = (1S,2R)-1-C-(indol-3-yl)glycerol 3-phosphate + CO2 + H2O. It participates in amino-acid biosynthesis; L-tryptophan biosynthesis; L-tryptophan from chorismate: step 4/5. In Paracidovorax citrulli (strain AAC00-1) (Acidovorax citrulli), this protein is Indole-3-glycerol phosphate synthase.